The chain runs to 619 residues: ESX-2 secretion system protein EccA2 (619 aa).

Gly373 to Thr380 is an ATP binding site.

This sequence belongs to the CbxX/CfxQ family. As to quaternary structure, part of the ESX-2 / type VII secretion system (T7SS), which is composed of cytosolic and membrane components.

It is found in the cytoplasm. Its function is as follows. Part of an ESX-2 / type VII specialized secretion system (T7SS), which exports several proteins. May have ATPase activity and might provide energy for the export of ESX-2 substrates. The polypeptide is ESX-2 secretion system protein EccA2 (Mycobacterium bovis (strain ATCC BAA-935 / AF2122/97)).